The following is a 141-amino-acid chain: Hemoglobin subunit alpha (141 aa).

A Globin domain is found at 1–141 (VLSSKDKTNV…VSTVLTSKYR (141 aa)). Position 3 is a phosphoserine (serine 3). Lysine 7 carries the post-translational modification N6-succinyllysine. Residue threonine 8 is modified to Phosphothreonine. Lysine 11 carries the N6-succinyllysine modification. Lysine 16 carries the N6-acetyllysine; alternate modification. At lysine 16 the chain carries N6-succinyllysine; alternate. Tyrosine 24 carries the phosphotyrosine modification. Lysine 40 bears the N6-succinyllysine mark. Serine 49 carries the post-translational modification Phosphoserine. Histidine 58 provides a ligand contact to O2. Histidine 87 serves as a coordination point for heme b. Serine 102 carries the post-translational modification Phosphoserine. Threonine 108 is subject to Phosphothreonine. A Phosphoserine modification is found at serine 124. Threonine 134 and threonine 137 each carry phosphothreonine. Serine 138 is modified (phosphoserine).

This sequence belongs to the globin family. In terms of assembly, heterotetramer of two alpha chains and two beta chains. Red blood cells.

Involved in oxygen transport from the lung to the various peripheral tissues. Its function is as follows. Hemopressin acts as an antagonist peptide of the cannabinoid receptor CNR1. Hemopressin-binding efficiently blocks cannabinoid receptor CNR1 and subsequent signaling. The protein is Hemoglobin subunit alpha (HBA) of Camelus dromedarius (Dromedary).